We begin with the raw amino-acid sequence, 499 residues long: Probable dipeptidase B (499 aa).

Cysteine 26 is an active-site residue.

This sequence belongs to the peptidase C69 family.

It catalyses the reaction an L-aminoacyl-L-amino acid + H2O = 2 an L-alpha-amino acid. The chain is Probable dipeptidase B (pepDB) from Streptococcus pyogenes serotype M6 (strain ATCC BAA-946 / MGAS10394).